The primary structure comprises 216 residues: Endo-1,4-beta-xylanase 2 (216 aa).

The signal sequence occupies residues 1 to 27 (MVSFSSLFVAACAAVTAFALPNELEKR). The region spanning 28 to 216 (AITSNEQGTN…SSGSASITVS (189 aa)) is the GH11 domain. The N-linked (GlcNAc...) asparagine glycan is linked to Asn-87. Residue Glu-112 is the Nucleophile of the active site. Glu-203 serves as the catalytic Proton donor.

Belongs to the glycosyl hydrolase 11 (cellulase G) family.

It localises to the secreted. The enzyme catalyses Endohydrolysis of (1-&gt;4)-beta-D-xylosidic linkages in xylans.. It participates in glycan degradation; xylan degradation. In terms of biological role, endo-1,4-beta-xylanase involved in the hydrolysis of xylan, a major structural heterogeneous polysaccharide found in plant biomass representing the second most abundant polysaccharide in the biosphere, after cellulose. The protein is Endo-1,4-beta-xylanase 2 (xyn2) of Rhizopus oryzae (Mucormycosis agent).